We begin with the raw amino-acid sequence, 576 residues long: 2-isopropylmalate synthase (576 aa).

Residues 31-305 form the Pyruvate carboxyltransferase domain; sequence PIWMSTDLRD…DPGLDFSHVN (275 aa). 4 residues coordinate Mg(2+): aspartate 40, histidine 244, histidine 246, and asparagine 280. The tract at residues 437–576 is regulatory domain; the sequence is ADGPIGYVSH…RGMAPSMELA (140 aa).

The protein belongs to the alpha-IPM synthase/homocitrate synthase family. LeuA type 2 subfamily. In terms of assembly, homodimer. The cofactor is Mg(2+).

It is found in the cytoplasm. It carries out the reaction 3-methyl-2-oxobutanoate + acetyl-CoA + H2O = (2S)-2-isopropylmalate + CoA + H(+). Its pathway is amino-acid biosynthesis; L-leucine biosynthesis; L-leucine from 3-methyl-2-oxobutanoate: step 1/4. Functionally, catalyzes the condensation of the acetyl group of acetyl-CoA with 3-methyl-2-oxobutanoate (2-ketoisovalerate) to form 3-carboxy-3-hydroxy-4-methylpentanoate (2-isopropylmalate). The sequence is that of 2-isopropylmalate synthase from Ralstonia nicotianae (strain ATCC BAA-1114 / GMI1000) (Ralstonia solanacearum).